Reading from the N-terminus, the 290-residue chain is Sodium/potassium-transporting ATPase subunit beta-2 (290 aa).

The Cytoplasmic portion of the chain corresponds to 1–39 (MVIQKEKKSCGQVVEEWKEFVWNPRTHQFMGRTGTSWAF). Residues 40–67 (ILLFYLVFYGFLTAMFTLTMWVMLQTVS) traverse the membrane as a helical; Signal-anchor for type II membrane protein segment. Residues 68–290 (DHTPKYQDRL…VAFKLRINKT (223 aa)) are Extracellular-facing. Asn-96 and Asn-118 each carry an N-linked (GlcNAc...) asparagine glycan. Cysteines 129 and 150 form a disulfide. Asn-153 and Asn-159 each carry an N-linked (GlcNAc...) asparagine glycan. Cys-160 and Cys-177 are joined by a disulfide. N-linked (GlcNAc...) asparagine glycosylation is found at Asn-193, Asn-197, and Asn-238. The tract at residues 193–290 (NQSMNVTCAG…VAFKLRINKT (98 aa)) is immunoglobulin-like. Cys-200 and Cys-261 form a disulfide bridge.

Belongs to the X(+)/potassium ATPases subunit beta family. As to quaternary structure, the sodium/potassium-transporting ATPase is composed of a catalytic alpha subunit, an auxiliary non-catalytic beta subunit and an additional regulatory subunit. Interacts with isoform 2 of BSG.

The protein localises to the cell membrane. In terms of biological role, this is the non-catalytic component of the active enzyme, which catalyzes the hydrolysis of ATP coupled with the exchange of Na(+) and K(+) ions across the plasma membrane. The exact function of the beta-2 subunit is not known. Mediates cell adhesion of neurons and astrocytes, and promotes neurite outgrowth. This chain is Sodium/potassium-transporting ATPase subunit beta-2 (ATP1B2), found in Homo sapiens (Human).